The primary structure comprises 242 residues: Protein HTATIP2 (242 aa).

A2 is modified (N-acetylalanine). The tract at residues 2–25 (AETEALSKLREDFRMQNKSVFILG) is required for interaction with elongation factor EEF1A1. NADPH is bound by residues S27, G28, E29, T30, R52, R53, L92, G93, Y143, K147, L170, and R178. Catalysis depends on Y143, which acts as the Proton acceptor. Residue K147 is part of the active site.

Monomer. Forms homodimers during oxidative stress. Interacts (via N-terminus) with elongation factor EEF1A1 (via middle-region); the interaction is direct and competes with EEF1A1 binding to guanyl-nucleotide exchange factor EEF1B2, thereby inhibiting GDP for GTP exchange and reactivation of EEF1A1. Interacts with nuclear transport receptors XPO4, IPO5/RANBP5, IPO7, IPO9 and KPNB1 as well as GCN1L1/GCN1 and LRPPRC probably through their HEAT repeats. Binds NCOA5/CIA.

Its subcellular location is the cytoplasm. Represses translation by preventing reactivation of elongation factor eEF1A. May also inhibit nuclear import by competing with nuclear import substrates for binding to a subset of nuclear transport receptors. Has additionally been proposed to act as a redox sensor involved in cellular oxidative stress surveillance. This Pongo pygmaeus (Bornean orangutan) protein is Protein HTATIP2 (HTATIP2).